The chain runs to 172 residues: Adenine phosphoribosyltransferase (172 aa).

The protein belongs to the purine/pyrimidine phosphoribosyltransferase family. As to quaternary structure, homodimer.

It is found in the cytoplasm. The enzyme catalyses AMP + diphosphate = 5-phospho-alpha-D-ribose 1-diphosphate + adenine. The protein operates within purine metabolism; AMP biosynthesis via salvage pathway; AMP from adenine: step 1/1. Functionally, catalyzes a salvage reaction resulting in the formation of AMP, that is energically less costly than de novo synthesis. The sequence is that of Adenine phosphoribosyltransferase from Staphylococcus haemolyticus (strain JCSC1435).